We begin with the raw amino-acid sequence, 182 residues long: UPF0397 protein BCA_2731 (182 aa).

5 helical membrane passes run 9–29 (VVAI…GFSI), 40–60 (AILT…IGLI), 71–91 (WGIW…MGLI), 114–134 (ITGL…DIIV), and 142–162 (IVIQ…VLGL).

It belongs to the UPF0397 family.

It localises to the cell membrane. The chain is UPF0397 protein BCA_2731 from Bacillus cereus (strain 03BB102).